We begin with the raw amino-acid sequence, 431 residues long: O-methyltransferase xanE (431 aa).

Residue aspartate 283 coordinates S-adenosyl-L-methionine. Histidine 330 acts as the Proton acceptor in catalysis.

This sequence belongs to the class I-like SAM-binding methyltransferase superfamily. Cation-independent O-methyltransferase family.

The protein operates within secondary metabolite biosynthesis. Its function is as follows. O-methyltransferase; part of the gene cluster that mediates the biosynthesis of the isocyanide xanthocillin and its derivatives. The first step of the pathway consists in the conversion of tyrosine into a vinyl-isonitrile intermediate by the isocyanide synthase xanB. Subsequent oxidative dimerization of this intermediate to form xanthocillin may involve the cytochrome P450 monooxygenase xanG, whose expression is coregulated with that of XanB. Xanthocillin can be further modified by the isonitrile hydratase-like protein xanA which introduces N-formyl groups and the methyltransferase xanE which introduces methyl groups, leading to the production of several derivatives including fumiformamide. Finally, fumiformamide can be subject to both oxidative and reductive cyclization to yield melanocins E and F, respectively. The protein is O-methyltransferase xanE of Aspergillus fumigatus (strain ATCC MYA-4609 / CBS 101355 / FGSC A1100 / Af293) (Neosartorya fumigata).